Reading from the N-terminus, the 541-residue chain is MAKIIAFDEEARRGLERGLNILADAVKVTLGPRGRNVVLEKKWGAPTITNDGVSIAKEIELDDPYEKIGAELVKEVAKKTDDVAGDGTTTATVLAQALVKEGLRNVAAGADPLSLKRGIEKAVEAVISELLASAKEIETKEEIAATASISAGDPEIGSLIAEALDKVGKEGVITVEESNTFGLELELTEGMRFDKGYISAYFVTDAERQETVLEDPYILIVNSKISNVKELVTVLEKVMQSNKPLLIIAEDIEGEALATLIVNKIRGTFKSVAVKAPGFGDRRKAQLADIAILTGGQVISEEVGLKLENAGLELLGTARKVVVTKDETTIVEGAGDAEQIAGRVAQIRAEIENSDSDYDREKLQERLAKLAGGVAVIKAGAATEVELKERKHRIEDAVRNAKAAVEEGIVAGGGVALIQAGAKAFANLTLQGDEATGANIVKVAIDAPLKQIAFNAGLEPGVVVDKVRGLPSGHGLNAATGVYEDLLAAGVNDPVKVTRSALQNAASIAGLFLTTEAVVADKPEKNAPAPGGDDMGGMGGF.

Residues threonine 29–proline 32, aspartate 86–threonine 90, glycine 413, asparagine 477–alanine 479, and aspartate 493 contribute to the ATP site.

The protein belongs to the chaperonin (HSP60) family. Forms a cylinder of 14 subunits composed of two heptameric rings stacked back-to-back. Interacts with the co-chaperonin GroES.

Its subcellular location is the cytoplasm. The enzyme catalyses ATP + H2O + a folded polypeptide = ADP + phosphate + an unfolded polypeptide.. Functionally, together with its co-chaperonin GroES, plays an essential role in assisting protein folding. The GroEL-GroES system forms a nano-cage that allows encapsulation of the non-native substrate proteins and provides a physical environment optimized to promote and accelerate protein folding. This is Chaperonin GroEL 1 from Paenarthrobacter aurescens (strain TC1).